Consider the following 287-residue polypeptide: Ribonuclease Z (287 aa).

Zn(2+) contacts are provided by histidine 64, histidine 66, aspartate 68, histidine 69, histidine 124, aspartate 191, and histidine 250. Residue aspartate 68 is the Proton acceptor of the active site.

It belongs to the RNase Z family. As to quaternary structure, homodimer. Requires Zn(2+) as cofactor.

It carries out the reaction Endonucleolytic cleavage of RNA, removing extra 3' nucleotides from tRNA precursor, generating 3' termini of tRNAs. A 3'-hydroxy group is left at the tRNA terminus and a 5'-phosphoryl group is left at the trailer molecule.. Functionally, zinc phosphodiesterase, which displays some tRNA 3'-processing endonuclease activity. Probably involved in tRNA maturation, by removing a 3'-trailer from precursor tRNA. In Pyrobaculum aerophilum (strain ATCC 51768 / DSM 7523 / JCM 9630 / CIP 104966 / NBRC 100827 / IM2), this protein is Ribonuclease Z.